The primary structure comprises 233 residues: Ribosomal RNA small subunit methyltransferase G (233 aa).

Residues Gly91, Met96, 142 to 143, and Arg157 contribute to the S-adenosyl-L-methionine site; that span reads VE.

Belongs to the methyltransferase superfamily. RNA methyltransferase RsmG family.

It localises to the cytoplasm. It catalyses the reaction guanosine(527) in 16S rRNA + S-adenosyl-L-methionine = N(7)-methylguanosine(527) in 16S rRNA + S-adenosyl-L-homocysteine. In terms of biological role, specifically methylates the N7 position of guanine in position 527 of 16S rRNA. The sequence is that of Ribosomal RNA small subunit methyltransferase G from Cupriavidus necator (strain ATCC 17699 / DSM 428 / KCTC 22496 / NCIMB 10442 / H16 / Stanier 337) (Ralstonia eutropha).